Here is a 623-residue protein sequence, read N- to C-terminus: Heterogeneous nuclear ribonucleoprotein L (623 aa).

Basic residues predominate over residues 1 to 16; the sequence is MSRRLLPRAEKRRRRL. The segment at 1–97 is disordered; that stretch reads MSRRLLPRAE…NYDDPHKTPA (97 aa). Over residues 17–27 the composition is skewed to basic and acidic residues; the sequence is EQRQQPDEQLR. Residues 28–37 are compositionally biased toward low complexity; it reads RAGAMVKMAA. Over residues 38–54 the composition is skewed to gly residues; that stretch reads AGGGGGGGRYYGGGNEG. Residues K59 and K62 each participate in a glycyl lysine isopeptide (Lys-Gly) (interchain with G-Cter in SUMO2) cross-link. Over residues 69–87 the composition is skewed to gly residues; that stretch reads QHGGGGGGGSGAAGGGGGE. S98 carries the phosphoserine modification. The RRM 1 domain maps to 99–173; the sequence is PVVHIRGLID…HPAFVNYSTS (75 aa). Residue K133 forms a Glycyl lysine isopeptide (Lys-Gly) (interchain with G-Cter in SUMO2) linkage. At S182 the chain carries Phosphoserine. The RRM 2 domain maps to 190-267; the sequence is SVLLFTILNP…CTLKIEYAKP (78 aa). K266 is subject to N6-acetyllysine. The segment covering 281-298 has biased composition (polar residues); sequence DYTNPNLSGQGDPGSNPN. The segment at 281 to 413 is disordered; sequence DYTNPNLSGQ…PPPPDYGPHA (133 aa). Phosphoserine is present on residues S288 and S295. A Glycyl lysine isopeptide (Lys-Gly) (interchain with G-Cter in SUMO2) cross-link involves residue K299. 2 positions are modified to asymmetric dimethylarginine: R388 and R392. Over residues 398–409 the composition is skewed to pro residues; the sequence is GHPPPPPPPPDY. At S415 the chain carries Phosphoserine. RRM domains lie at 416 to 490 and 498 to 586; these read PVLM…VSKQ and SYGL…WDSK. Phosphoserine; by CaMK4 is present on S578. K602 participates in a covalent cross-link: Glycyl lysine isopeptide (Lys-Gly) (interchain with G-Cter in SUMO2).

Identified in a IGF2BP1-dependent mRNP granule complex containing untranslated mRNAs. Interacts with HNRNPLL. Interacts with APEX1; the interaction is DNA-dependent. Component of a complex with SETD2. Interacts with ELAVL1. Part of a transcription inhibitory ribonucleoprotein complex composed at least of the circular RNA circZNF827, ZNF827 and HNRNPK. Interacts with CHD8 in an RNA-dependent manner. Several isoelectric forms of the L protein are probably the results of post-translational modifications. Post-translationally, phosphorylation at Ser-578 by CaMK4 enhances interaction with a CaMK4-responsive RNA element (CaRRE1), and prevents inclusion of the stress axis-regulated exon (STREX) of the KCNMA1 potassium channel transcripts upon membrane depolarization.

It is found in the nucleus. It localises to the nucleoplasm. The protein localises to the cytoplasm. Functionally, splicing factor binding to exonic or intronic sites and acting as either an activator or repressor of exon inclusion. Exhibits a binding preference for CA-rich elements. Component of the heterogeneous nuclear ribonucleoprotein (hnRNP) complexes and associated with most nascent transcripts. Associates, together with APEX1, to the negative calcium responsive element (nCaRE) B2 of the APEX2 promoter. As part of a ribonucleoprotein complex composed at least of ZNF827, HNRNPK and the circular RNA circZNF827 that nucleates the complex on chromatin, may negatively regulate the transcription of genes involved in neuronal differentiation. Regulates alternative splicing of a core group of genes involved in neuronal differentiation, likely by mediating H3K36me3-coupled transcription elongation and co-transcriptional RNA processing via interaction with CHD8. This chain is Heterogeneous nuclear ribonucleoprotein L, found in Rattus norvegicus (Rat).